The chain runs to 542 residues: Protein XP55 (542 aa).

An N-terminal signal peptide occupies residues 1-33 (MTARRTRWTRRTDRSLPIRSAAAAVAFAAGATA). C34 carries the N-palmitoyl cysteine lipid modification. A lipid anchor (S-diacylglycerol cysteine) is attached at C34. A disordered region spans residues 519–542 (LEGRTNTASPAGPGGTSRTGGRKK).

It belongs to the bacterial solute-binding protein 5 family.

Its subcellular location is the cell membrane. Required for transport of an unidentified substrate. In Streptomyces lividans, this protein is Protein XP55 (xp55).